Here is an 832-residue protein sequence, read N- to C-terminus: Tuftelin-interacting protein 11 (832 aa).

Disordered regions lie at residues 1–21 and 33–145; these read MSMS…GVEI and NEFN…GNWE. Basic and acidic residues-rich tracts occupy residues 36–49 and 88–99; these read NPDR…KEEA and TAAEEKAEREGS. A compositionally biased stretch (polar residues) spans 121–130; it reads TGGSFKTSQR. One can recognise a G-patch domain in the interval 148–194; it reads TRGIGQKLLQKMGYVPGKGLGKNAQGIVNPIEAKLRKGKGAVGAYGS. S209 carries the post-translational modification Phosphoserine.

This sequence belongs to the TFP11/STIP family. As to quaternary structure, identified in the spliceosome C complex.

The protein localises to the nucleus. Functionally, involved in pre-mRNA splicing, specifically in spliceosome disassembly during late-stage splicing events. In Danio rerio (Zebrafish), this protein is Tuftelin-interacting protein 11 (tfip11).